Consider the following 276-residue polypeptide: 4-hydroxy-3-methylbut-2-enyl diphosphate reductase (276 aa).

Cys12 contacts [4Fe-4S] cluster. The (2E)-4-hydroxy-3-methylbut-2-enyl diphosphate site is built by His36 and His71. Dimethylallyl diphosphate contacts are provided by His36 and His71. Isopentenyl diphosphate-binding residues include His36 and His71. Cys93 contributes to the [4Fe-4S] cluster binding site. Residue His121 coordinates (2E)-4-hydroxy-3-methylbut-2-enyl diphosphate. Residue His121 coordinates dimethylallyl diphosphate. His121 is an isopentenyl diphosphate binding site. The active-site Proton donor is Glu123. Thr160 contacts (2E)-4-hydroxy-3-methylbut-2-enyl diphosphate. Cys188 lines the [4Fe-4S] cluster pocket. 4 residues coordinate (2E)-4-hydroxy-3-methylbut-2-enyl diphosphate: Ser216, Ser217, Asn218, and Ser259. Dimethylallyl diphosphate-binding residues include Ser216, Ser217, Asn218, and Ser259. Isopentenyl diphosphate is bound by residues Ser216, Ser217, Asn218, and Ser259.

It belongs to the IspH family. It depends on [4Fe-4S] cluster as a cofactor.

The enzyme catalyses isopentenyl diphosphate + 2 oxidized [2Fe-2S]-[ferredoxin] + H2O = (2E)-4-hydroxy-3-methylbut-2-enyl diphosphate + 2 reduced [2Fe-2S]-[ferredoxin] + 2 H(+). The catalysed reaction is dimethylallyl diphosphate + 2 oxidized [2Fe-2S]-[ferredoxin] + H2O = (2E)-4-hydroxy-3-methylbut-2-enyl diphosphate + 2 reduced [2Fe-2S]-[ferredoxin] + 2 H(+). Its pathway is isoprenoid biosynthesis; dimethylallyl diphosphate biosynthesis; dimethylallyl diphosphate from (2E)-4-hydroxy-3-methylbutenyl diphosphate: step 1/1. The protein operates within isoprenoid biosynthesis; isopentenyl diphosphate biosynthesis via DXP pathway; isopentenyl diphosphate from 1-deoxy-D-xylulose 5-phosphate: step 6/6. Catalyzes the conversion of 1-hydroxy-2-methyl-2-(E)-butenyl 4-diphosphate (HMBPP) into a mixture of isopentenyl diphosphate (IPP) and dimethylallyl diphosphate (DMAPP). Acts in the terminal step of the DOXP/MEP pathway for isoprenoid precursor biosynthesis. The chain is 4-hydroxy-3-methylbut-2-enyl diphosphate reductase from Nautilia profundicola (strain ATCC BAA-1463 / DSM 18972 / AmH).